The sequence spans 139 residues: Small ribosomal subunit protein eS6 (139 aa).

This sequence belongs to the eukaryotic ribosomal protein eS6 family.

The sequence is that of Small ribosomal subunit protein eS6 from Methanosarcina barkeri (strain Fusaro / DSM 804).